Here is a 323-residue protein sequence, read N- to C-terminus: Aldo-keto reductase family 1 member C18 (323 aa).

NADP(+) is bound by residues 20 to 24 and Asp-50; that span reads GFGTY. Residue Tyr-55 is the Proton donor of the active site. His-117 is a substrate binding site. Residues 166 to 167, Gln-190, 216 to 221, and 270 to 280 contribute to the NADP(+) site; these read SN, YGALGT, and KSFNEERIREN.

This sequence belongs to the aldo/keto reductase family. In terms of assembly, monomer.

Its subcellular location is the cytoplasm. The enzyme catalyses (17R,20S)-17,20-dihydroxypregn-4-en-3-one + NADP(+) = 17alpha-hydroxyprogesterone + NADPH + H(+). The catalysed reaction is (17R,20S)-17,20-dihydroxypregn-4-en-3-one + NAD(+) = 17alpha-hydroxyprogesterone + NADH + H(+). Catalyzes the conversion of progesterone into 20-alpha-dihydroprogesterone (20 alpha-OHP). This is Aldo-keto reductase family 1 member C18 (Akr1c18) from Mus musculus (Mouse).